We begin with the raw amino-acid sequence, 166 residues long: Small ribosomal subunit protein bS6 (166 aa).

Composition is skewed to basic and acidic residues over residues 96 to 142 and 149 to 166; these read HEEG…DRPP and GGDR…GGAE. The interval 96–166 is disordered; sequence HEEGPSAMMQ…PREGFEGGAE (71 aa).

It belongs to the bacterial ribosomal protein bS6 family.

In terms of biological role, binds together with bS18 to 16S ribosomal RNA. The polypeptide is Small ribosomal subunit protein bS6 (Mesorhizobium japonicum (strain LMG 29417 / CECT 9101 / MAFF 303099) (Mesorhizobium loti (strain MAFF 303099))).